The sequence spans 393 residues: RNA polymerase II holoenzyme cyclin-like subunit (393 aa).

The region spanning Ile-51–Val-146 is the Cyclin N-terminal domain.

Belongs to the cyclin family. Cyclin C subfamily. As to quaternary structure, component of the SRB8-11 complex, a regulatory module of the Mediator complex.

It is found in the nucleus. In terms of biological role, component of the SRB8-11 complex. The SRB8-11 complex is a regulatory module of the Mediator complex which is itself involved in regulation of basal and activated RNA polymerase II-dependent transcription. The SRB8-11 complex may be involved in the transcriptional repression of a subset of genes regulated by Mediator. It may inhibit the association of the Mediator complex with RNA polymerase II to form the holoenzyme complex. The SRB8-11 complex phosphorylates the C-terminal domain (CTD) of the largest subunit of RNA polymerase II. The chain is RNA polymerase II holoenzyme cyclin-like subunit (SSN8) from Mycosarcoma maydis (Corn smut fungus).